Reading from the N-terminus, the 241-residue chain is MKKTIFVGDLHLSADRPDITQAFIYFLNHGLDNTEALYIIGDLFEVWMGDDIAESFTIAIAEAIKTVSNSIPVYFTHGNRDFMVDKQFCLRAGMKILPEVYCINLYGVNTVILHGDSLCTLDIAYQRFRRFRSLDIVRWVYSHLPKKTRLNIAAKIRQKSVQGNQQKHYEIMDVESSAVTALLASTGCQRMIHGHTHRPAIHQLTAQEQRVVVGDWYTQGSVLNVSEKGCELVTLPFSETN.

Mn(2+) is bound by residues Asp-9, His-11, Asp-42, Asn-79, and His-114. 79–80 (NR) serves as a coordination point for substrate. Substrate contacts are provided by Asp-122, Ser-160, Asn-164, Lys-167, and His-195. Mn(2+)-binding residues include His-195 and His-197.

Belongs to the LpxH family. It depends on Mn(2+) as a cofactor.

It is found in the cell inner membrane. The enzyme catalyses UDP-2-N,3-O-bis[(3R)-3-hydroxytetradecanoyl]-alpha-D-glucosamine + H2O = 2-N,3-O-bis[(3R)-3-hydroxytetradecanoyl]-alpha-D-glucosaminyl 1-phosphate + UMP + 2 H(+). It participates in glycolipid biosynthesis; lipid IV(A) biosynthesis; lipid IV(A) from (3R)-3-hydroxytetradecanoyl-[acyl-carrier-protein] and UDP-N-acetyl-alpha-D-glucosamine: step 4/6. Its function is as follows. Hydrolyzes the pyrophosphate bond of UDP-2,3-diacylglucosamine to yield 2,3-diacylglucosamine 1-phosphate (lipid X) and UMP by catalyzing the attack of water at the alpha-P atom. Involved in the biosynthesis of lipid A, a phosphorylated glycolipid that anchors the lipopolysaccharide to the outer membrane of the cell. This is UDP-2,3-diacylglucosamine hydrolase from Shewanella frigidimarina (strain NCIMB 400).